The primary structure comprises 257 residues: Capsid protein (257 aa).

The Bipartite nuclear localization signal signature appears at 3–20; it reads KRTGDILMSSPLSKFRRK. The short motif at 40–54 is the Nuclear localization signal element; that stretch reads KRRSWTYRPMYRKPR. The segment at 68–85 is a zinc-finger region; it reads CEGPCKVQSYEQRDDVKH. A Nuclear export signal motif is present at residues 101–122; sequence ITHRVGKRFCIKSIYILGKIWM. The Bipartite nuclear localization signal signature appears at 201–248; the sequence is KRFFKVNTHVVYNHQEQAKYENHTENALLLYMACTHASNPVYATLKIR.

It belongs to the geminiviridae capsid protein family. As to quaternary structure, homomultimer. Binds to single-stranded and double-stranded viral DNA. Interacts (via nuclear localization signals) with host importin alpha-1a.

The protein resides in the virion. It localises to the host nucleus. Functionally, encapsidates the viral genome into characteristic twinned ('geminate') particles. Binds the genomic viral ssDNA and shuttles it into and out of the cell nucleus. Plays a role in protection of the genome from degradation, virus acquisition and transmission by insect vectors, infectivity, and systemic movement. The CP of monopartite geminiviruses is absolutely essential for virus movement. The polypeptide is Capsid protein (Solanum lycopersicum (Tomato)).